Here is a 378-residue protein sequence, read N- to C-terminus: Chaperone protein DnaJ 2 (378 aa).

Residues 4-68 (DYYGLLGVSR…EKRRIVDLGG (65 aa)) enclose the J domain. Residues 128–210 (GVTKQVTVDT…CVGDGRVRAR (83 aa)) form a CR-type zinc finger. Zn(2+)-binding residues include cysteine 141, cysteine 144, cysteine 158, cysteine 161, cysteine 184, cysteine 187, cysteine 198, and cysteine 201. CXXCXGXG motif repeat units follow at residues 141–148 (CDRCQGKG), 158–165 (CDTCGGRG), 184–191 (CPTCRGVG), and 198–205 (CCQCVGDG).

Belongs to the DnaJ family. Homodimer. Zn(2+) is required as a cofactor.

The protein resides in the cytoplasm. Its function is as follows. Participates actively in the response to hyperosmotic and heat shock by preventing the aggregation of stress-denatured proteins and by disaggregating proteins, also in an autonomous, DnaK-independent fashion. Unfolded proteins bind initially to DnaJ; upon interaction with the DnaJ-bound protein, DnaK hydrolyzes its bound ATP, resulting in the formation of a stable complex. GrpE releases ADP from DnaK; ATP binding to DnaK triggers the release of the substrate protein, thus completing the reaction cycle. Several rounds of ATP-dependent interactions between DnaJ, DnaK and GrpE are required for fully efficient folding. Also involved, together with DnaK and GrpE, in the DNA replication of plasmids through activation of initiation proteins. In Mycobacterium leprae (strain TN), this protein is Chaperone protein DnaJ 2.